A 401-amino-acid polypeptide reads, in one-letter code: Argininosuccinate synthase (401 aa).

Alanine 9–serine 17 contributes to the ATP binding site. Residue tyrosine 88 coordinates L-citrulline. Glycine 118 is a binding site for ATP. L-aspartate-binding residues include threonine 120, asparagine 124, and aspartate 125. Asparagine 124 is an L-citrulline binding site. L-citrulline contacts are provided by arginine 128, serine 176, serine 185, glutamate 261, and tyrosine 273.

The protein belongs to the argininosuccinate synthase family. Type 1 subfamily. As to quaternary structure, homotetramer.

It localises to the cytoplasm. The catalysed reaction is L-citrulline + L-aspartate + ATP = 2-(N(omega)-L-arginino)succinate + AMP + diphosphate + H(+). It functions in the pathway amino-acid biosynthesis; L-arginine biosynthesis; L-arginine from L-ornithine and carbamoyl phosphate: step 2/3. The protein is Argininosuccinate synthase of Symbiobacterium thermophilum (strain DSM 24528 / JCM 14929 / IAM 14863 / T).